The chain runs to 281 residues: NADPH-dependent 7-cyano-7-deazaguanine reductase (281 aa).

87–89 (VES) is a binding site for substrate. 89–90 (SK) serves as a coordination point for NADPH. Catalysis depends on C188, which acts as the Thioimide intermediate. Catalysis depends on D195, which acts as the Proton donor. A substrate-binding site is contributed by 227–228 (HE). 256 to 257 (RG) contacts NADPH.

The protein belongs to the GTP cyclohydrolase I family. QueF type 2 subfamily. In terms of assembly, homodimer.

It is found in the cytoplasm. It catalyses the reaction 7-aminomethyl-7-carbaguanine + 2 NADP(+) = 7-cyano-7-deazaguanine + 2 NADPH + 3 H(+). It participates in tRNA modification; tRNA-queuosine biosynthesis. In terms of biological role, catalyzes the NADPH-dependent reduction of 7-cyano-7-deazaguanine (preQ0) to 7-aminomethyl-7-deazaguanine (preQ1). The chain is NADPH-dependent 7-cyano-7-deazaguanine reductase from Aliivibrio salmonicida (strain LFI1238) (Vibrio salmonicida (strain LFI1238)).